Here is a 154-residue protein sequence, read N- to C-terminus: Transcriptional repressor NrdR (154 aa).

Positions 1–22 (MRCPFCGNDDTQVKDSRPTEDN) are disordered. A zinc finger lies at 3–34 (CPFCGNDDTQVKDSRPTEDNSAIRRRRFCPAC). Over residues 11–22 (TQVKDSRPTEDN) the composition is skewed to basic and acidic residues. The ATP-cone domain maps to 49–139 (LTVVKSGGSR…VYKDFREVTD (91 aa)).

It belongs to the NrdR family. Zn(2+) serves as cofactor.

In terms of biological role, negatively regulates transcription of bacterial ribonucleotide reductase nrd genes and operons by binding to NrdR-boxes. The sequence is that of Transcriptional repressor NrdR from Rhodospirillum centenum (strain ATCC 51521 / SW).